The chain runs to 655 residues: Phosphatidylinositol-3,5-bisphosphate 3-phosphatase MTMR6 (655 aa).

Positions 1-101 constitute a GRAM domain; that stretch reads MEHIRTTKVE…YNSLLQLSKQ (101 aa). The interval 2-141 is interaction with RAB1B; the sequence is EHIRTTKVEQ…AEYERMGVPN (140 aa). Phosphotyrosine is present on tyrosine 108. Residues 124-537 enclose the Myotubularin phosphatase domain; that stretch reads GWQLIDLAAE…FNFKFWRNMY (414 aa). Residues asparagine 286, asparagine 311, and isoleucine 312 each coordinate a 1,2-diacyl-sn-glycero-3-phospho-(1D-myo-inositol-3,5-bisphosphate). A 1,2-diacyl-sn-glycero-3-phospho-(1D-myo-inositol-3-phosphate) is bound by residues asparagine 286, asparagine 311, and isoleucine 312. Cysteine 374 functions as the Phosphocysteine intermediate in the catalytic mechanism. A 1,2-diacyl-sn-glycero-3-phospho-(1D-myo-inositol-3,5-bisphosphate)-binding residues include serine 375, aspartate 376, glycine 377, tryptophan 378, aspartate 379, arginine 380, lysine 416, and arginine 420. A 1,2-diacyl-sn-glycero-3-phospho-(1D-myo-inositol-3-phosphate)-binding residues include serine 375, aspartate 376, glycine 377, tryptophan 378, aspartate 379, and arginine 380. Residue arginine 420 coordinates a 1,2-diacyl-sn-glycero-3-phospho-(1D-myo-inositol-3-phosphate). Residues 547 to 581 adopt a coiled-coil conformation; sequence RQSVLNIIMNMNEQNKQLEEDVKDLEAKIKQCKSG. A phosphoserine mark is found at serine 595, serine 623, and serine 645.

Belongs to the protein-tyrosine phosphatase family. Non-receptor class myotubularin subfamily. In terms of assembly, homodimer. Heterodimer (via C-terminus) with MTMR9 (via C-terminus). Interacts with ALKBH4. Interacts with KCNN4. Interacts (via GRAM domain) with RAB1B (in GDP-bound form); the interaction regulates MTMR6 recruitment to the endoplasmic reticulum-Golgi intermediate compartment.

Its subcellular location is the cytoplasm. The protein resides in the endoplasmic reticulum. It localises to the cell projection. It is found in the ruffle membrane. The protein localises to the endoplasmic reticulum-Golgi intermediate compartment. Its subcellular location is the perinuclear region. It carries out the reaction a 1,2-diacyl-sn-glycero-3-phospho-(1D-myo-inositol-3,5-bisphosphate) + H2O = a 1,2-diacyl-sn-glycero-3-phospho-(1D-myo-inositol-5-phosphate) + phosphate. It catalyses the reaction a 1,2-diacyl-sn-glycero-3-phospho-(1D-myo-inositol-3-phosphate) + H2O = a 1,2-diacyl-sn-glycero-3-phospho-(1D-myo-inositol) + phosphate. The enzyme catalyses 1,2-dioctanoyl-sn-glycero-3-phospho-(1D-myo-inositol-3,5-bisphosphate) + H2O = 1,2-dioctanoyl-sn-glycero-3-phospho-(1D-myo-inositol-5-phosphate) + phosphate. The catalysed reaction is 1,2-dioctanoyl-sn-glycero-3-phospho-(1-D-myo-inositol-3-phosphate) + H2O = 1,2-dioctanoyl-sn-glycero-3-phospho-(1D-myo-inositol) + phosphate. Allosterically activated by phosphatidylserine and/or phosphatidylinositol 4-phosphate (PtdIns(4)P), and phosphatidylinositol 5-phosphate (PtdIns(5)P). Interaction with MTMR9 increases catalytic activity towards phosphatidylinositol 3,5-bisphosphate. Functionally, lipid phosphatase that specifically dephosphorylates the D-3 position of phosphatidylinositol 3-phosphate and phosphatidylinositol 3,5-bisphosphate, generating phosphatidylinositol and phosphatidylinositol 5-phosphate. Binds with high affinity to phosphatidylinositol 3,5-bisphosphate (PtdIns(3,5)P2) but also to phosphatidylinositol 3-phosphate (PtdIns(3)P), phosphatidylinositol 4-phosphate (PtdIns(4)P), and phosphatidylinositol 5-phosphate (PtdIns(5)P), phosphatidic acid and phosphatidylserine. Negatively regulates ER-Golgi protein transport. Probably in association with MTMR9, plays a role in the late stages of macropinocytosis by dephosphorylating phosphatidylinositol 3-phosphate in membrane ruffles. Acts as a negative regulator of KCNN4/KCa3.1 channel activity in CD4(+) T-cells possibly by decreasing intracellular levels of phosphatidylinositol 3-phosphate. Negatively regulates proliferation of reactivated CD4(+) T-cells. In complex with MTMR9, negatively regulates DNA damage-induced apoptosis. The formation of the MTMR6-MTMR9 complex stabilizes both MTMR6 and MTMR9 protein levels. In Rattus norvegicus (Rat), this protein is Phosphatidylinositol-3,5-bisphosphate 3-phosphatase MTMR6.